A 109-amino-acid polypeptide reads, in one-letter code: Thioredoxin (109 aa).

A Thioredoxin domain is found at 2 to 107 (SISQVIDTSF…LLNTLQKHLK (106 aa)). Residues Cys31 and Cys34 each act as nucleophile in the active site. The cysteines at positions 31 and 34 are disulfide-linked.

This sequence belongs to the thioredoxin family.

The protein localises to the plastid. Its subcellular location is the chloroplast. Its function is as follows. Participates in various redox reactions through the reversible oxidation of its active center dithiol to a disulfide and catalyzes dithiol-disulfide exchange reactions. This chain is Thioredoxin (trxA), found in Griffithsia pacifica (Red alga).